Here is a 222-residue protein sequence, read N- to C-terminus: Pleckstrin homology domain-containing family B member 2 (222 aa).

One can recognise a PH domain in the interval 2 to 109 (AFVKSGWLLR…WKFTLQDSRT (108 aa)). Lysine 20 is a binding site for a 1,2-diacyl-sn-glycero-3-phospho-L-serine.

The protein localises to the recycling endosome membrane. In terms of biological role, involved in retrograde transport of recycling endosomes. This is Pleckstrin homology domain-containing family B member 2 (PLEKHB2) from Pongo abelii (Sumatran orangutan).